Here is a 304-residue protein sequence, read N- to C-terminus: N-acetylmuramic acid 6-phosphate etherase (304 aa).

Phosphoserine is present on S2. Positions 59-222 constitute an SIS domain; that stretch reads AYESFQNGGR…STAVMVKIGK (164 aa). The active-site Proton donor is the E87. Residue E118 is part of the active site.

The protein belongs to the GCKR-like family. MurNAc-6-P etherase subfamily. As to quaternary structure, homodimer.

The enzyme catalyses N-acetyl-D-muramate 6-phosphate + H2O = N-acetyl-D-glucosamine 6-phosphate + (R)-lactate. It functions in the pathway amino-sugar metabolism; N-acetylmuramate degradation. Specifically catalyzes the cleavage of the D-lactyl ether substituent of MurNAc 6-phosphate, producing GlcNAc 6-phosphate and D-lactate. This Bacillus subtilis (strain 168) protein is N-acetylmuramic acid 6-phosphate etherase.